Reading from the N-terminus, the 330-residue chain is Urokinase plasminogen activator surface receptor (330 aa).

An N-terminal signal peptide occupies residues 1–20 (MGQPLLLLLLVYTYIPGSWG). UPAR/Ly6 domains lie at 21–112 (LRCL…RNRY), 113–208 (LECA…PPNG), and 209–300 (LQCY…PGKG). Cystine bridges form between C23–C44, C26–C32, and C37–C65. N28 carries an N-linked (GlcNAc...) asparagine glycan. An N-linked (GlcNAc...) asparagine glycan is attached at N72. Intrachain disulfides connect C91–C96, C115–C142, C118–C125, C135–C164, C170–C187, C188–C193, C211–C239, C214–C222, C232–C258, C264–C282, and C283–C288. N179 and N189 each carry an N-linked (GlcNAc...) asparagine glycan. A glycan (N-linked (GlcNAc...) asparagine) is linked at N279. G300 carries GPI-anchor amidated glycine lipidation. A propeptide spans 301 to 330 (GAPKTSPAHLSFFVSLLLTARLWGATLLCT) (removed in mature form).

Monomer. Interacts (via the UPAR/Ly6 domains) with SRPX2. Interacts with MRC2. Interacts with SORL1 (via N-terminal ectodomain); this interaction decreases PLAUR internalization. The ternary complex composed of PLAUR-PLAU-SERPINE1 also interacts with SORL1. Interacts with CD82; this interaction prevents PLAUR from binding to its high affinity ligand PLAU.

The protein resides in the cell membrane. Its function is as follows. Acts as a receptor for urokinase plasminogen activator. Plays a role in localizing and promoting plasmin formation. Mediates the proteolysis-independent signal transduction activation effects of U-PA. This Bos taurus (Bovine) protein is Urokinase plasminogen activator surface receptor (PLAUR).